We begin with the raw amino-acid sequence, 629 residues long: tRNA uridine 5-carboxymethylaminomethyl modification enzyme MnmG (629 aa).

13-18 (GGGHAG) lines the FAD pocket. 273–287 (GPRYCPSIEDKVVRF) contacts NAD(+).

The protein belongs to the MnmG family. As to quaternary structure, homodimer. Heterotetramer of two MnmE and two MnmG subunits. It depends on FAD as a cofactor.

The protein localises to the cytoplasm. NAD-binding protein involved in the addition of a carboxymethylaminomethyl (cmnm) group at the wobble position (U34) of certain tRNAs, forming tRNA-cmnm(5)s(2)U34. This Nitrosococcus oceani (strain ATCC 19707 / BCRC 17464 / JCM 30415 / NCIMB 11848 / C-107) protein is tRNA uridine 5-carboxymethylaminomethyl modification enzyme MnmG.